The sequence spans 217 residues: Protein-L-isoaspartate O-methyltransferase (217 aa).

S67 is a catalytic residue.

The protein belongs to the methyltransferase superfamily. L-isoaspartyl/D-aspartyl protein methyltransferase family.

It is found in the cytoplasm. It catalyses the reaction [protein]-L-isoaspartate + S-adenosyl-L-methionine = [protein]-L-isoaspartate alpha-methyl ester + S-adenosyl-L-homocysteine. Its function is as follows. Catalyzes the methyl esterification of L-isoaspartyl residues in peptides and proteins that result from spontaneous decomposition of normal L-aspartyl and L-asparaginyl residues. It plays a role in the repair and/or degradation of damaged proteins. The sequence is that of Protein-L-isoaspartate O-methyltransferase from Azoarcus sp. (strain BH72).